A 189-amino-acid chain; its full sequence is Prostaglandin-H2 D-isomerase (189 aa).

A signal peptide spans 1–24 (MATPSSLWLGLALLGTLGVLQTPA). Q25 is modified (pyrrolidone carboxylic acid). N49 carries an N-linked (GlcNAc...) asparagine glycan. Catalysis depends on C63, which acts as the Nucleophile. Residue N76 is glycosylated (N-linked (GlcNAc...) asparagine). The cysteines at positions 87 and 184 are disulfide-linked.

This sequence belongs to the calycin superfamily. Lipocalin family. In terms of assembly, monomer. As to expression, abundant in the brain and CNS, where it is expressed in tissues of the blood-brain barrier and secreted into the cerebro-spinal fluid.

The protein resides in the rough endoplasmic reticulum. It is found in the nucleus membrane. Its subcellular location is the golgi apparatus. The protein localises to the cytoplasm. It localises to the perinuclear region. The protein resides in the secreted. The catalysed reaction is prostaglandin H2 = prostaglandin D2. Catalyzes the conversion of PGH2 to PGD2, a prostaglandin involved in smooth muscle contraction/relaxation and a potent inhibitor of platelet aggregation. Involved in a variety of CNS functions, such as sedation, NREM sleep and PGE2-induced allodynia, and may have an anti-apoptotic role in oligodendrocytes. Binds small non-substrate lipophilic molecules, including biliverdin, bilirubin, retinal, retinoic acid and thyroid hormone, and may act as a scavenger for harmful hydrophobic molecules and as a secretory retinoid and thyroid hormone transporter. Possibly involved in development and maintenance of the blood-brain, blood-retina, blood-aqueous humor and blood-testis barrier. It is likely to play important roles in both maturation and maintenance of the central nervous system and male reproductive system. Involved in PLA2G3-dependent maturation of mast cells. PLA2G3 is secreted by immature mast cells and acts on nearby fibroblasts upstream to PTDGS to synthesize PGD2, which in turn promotes mast cell maturation and degranulation via PTGDR. This is Prostaglandin-H2 D-isomerase (PTGDS) from Sus scrofa (Pig).